We begin with the raw amino-acid sequence, 240 residues long: FMN-dependent NADH:quinone oxidoreductase 2 (240 aa).

Residues S10 and 23–25 contribute to the FMN site; that span reads SIS.

Belongs to the azoreductase type 1 family. In terms of assembly, homodimer. Requires FMN as cofactor.

It carries out the reaction 2 a quinone + NADH + H(+) = 2 a 1,4-benzosemiquinone + NAD(+). The enzyme catalyses N,N-dimethyl-1,4-phenylenediamine + anthranilate + 2 NAD(+) = 2-(4-dimethylaminophenyl)diazenylbenzoate + 2 NADH + 2 H(+). Its function is as follows. Quinone reductase that provides resistance to thiol-specific stress caused by electrophilic quinones. Also exhibits azoreductase activity. Catalyzes the reductive cleavage of the azo bond in aromatic azo compounds to the corresponding amines. The protein is FMN-dependent NADH:quinone oxidoreductase 2 of Idiomarina loihiensis (strain ATCC BAA-735 / DSM 15497 / L2-TR).